A 353-amino-acid polypeptide reads, in one-letter code: Photosystem II D2 protein (353 aa).

Residue Thr-2 is modified to N-acetylthreonine. A Phosphothreonine modification is found at Thr-2. A helical membrane pass occupies residues Cys-41–Thr-61. A chlorophyll a-binding site is contributed by His-118. A helical transmembrane segment spans residues Gly-125–Pro-141. Residues Gln-130 and Asn-143 each coordinate pheophytin a. Residues Val-153 to Ser-166 traverse the membrane as a helical segment. Chlorophyll a is bound at residue His-198. The helical transmembrane segment at Ala-208–Asp-228 threads the bilayer. The a plastoquinone site is built by His-215 and Phe-262. His-215 is a Fe cation binding site. His-269 serves as a coordination point for Fe cation. A helical membrane pass occupies residues Gly-279 to Arg-295.

This sequence belongs to the reaction center PufL/M/PsbA/D family. PSII is composed of 1 copy each of membrane proteins PsbA, PsbB, PsbC, PsbD, PsbE, PsbF, PsbH, PsbI, PsbJ, PsbK, PsbL, PsbM, PsbT, PsbX, PsbY, PsbZ, Psb30/Ycf12, at least 3 peripheral proteins of the oxygen-evolving complex and a large number of cofactors. It forms dimeric complexes. The D1/D2 heterodimer binds P680, chlorophylls that are the primary electron donor of PSII, and subsequent electron acceptors. It shares a non-heme iron and each subunit binds pheophytin, quinone, additional chlorophylls, carotenoids and lipids. There is also a Cl(-1) ion associated with D1 and D2, which is required for oxygen evolution. The PSII complex binds additional chlorophylls, carotenoids and specific lipids. serves as cofactor.

It is found in the plastid. The protein resides in the chloroplast thylakoid membrane. It carries out the reaction 2 a plastoquinone + 4 hnu + 2 H2O = 2 a plastoquinol + O2. Functionally, photosystem II (PSII) is a light-driven water:plastoquinone oxidoreductase that uses light energy to abstract electrons from H(2)O, generating O(2) and a proton gradient subsequently used for ATP formation. It consists of a core antenna complex that captures photons, and an electron transfer chain that converts photonic excitation into a charge separation. The D1/D2 (PsbA/PsbD) reaction center heterodimer binds P680, the primary electron donor of PSII as well as several subsequent electron acceptors. D2 is needed for assembly of a stable PSII complex. The protein is Photosystem II D2 protein of Pinus thunbergii (Japanese black pine).